The chain runs to 355 residues: MDKFLIKMPIKHKNNETPEQKPIVKKETPKAAAKQSNKNTPIQAKEKENAQNDTPKQGRAGRSAKPAAKRKNLDTLEVNTEKNTAESENPPKRRSGRLTRSTRSMAEEGTPSPEKVKPEKLPFIKYRGAIKYFTENQDIAASADDVMQWVDKQTDVDVVPMAFDMEWPFSFQTGPGKSSVIQICVDEKCCYVYQLTNLKKLPAALVALINHPKVRLHGVNIKADFRKLQRDFPEVSADALIEKCVDLGVWCNEICETGGRWSLERLANFIAKKAMDKSKKVRMSKWHVIPLDENQLMYAAIDVYIGQVIYRDLEQREKQKLINELQFKEQNGEAAFKAVKGLGETFLSKINEITL.

The disordered stretch occupies residues 1-119 (MDKFLIKMPI…TPSPEKVKPE (119 aa)). Basic and acidic residues-rich tracts occupy residues 13 to 29 (KNNE…KETP) and 71 to 91 (KNLD…ENPP). 2 positions are modified to phosphoserine: serine 104 and serine 112. A 3'-5' exonuclease domain is found at 154 to 315 (TDVDVVPMAF…GQVIYRDLEQ (162 aa)). 3 residues coordinate Mg(2+): aspartate 164, glutamate 166, and aspartate 302.

This sequence belongs to the WRNexo family.

The protein localises to the nucleus. In terms of biological role, has exonuclease activity on both single-stranded and duplex templates bearing overhangs, but not blunt ended duplex DNA, and cleaves in a 3'-5' direction. Essential for the formation of DNA replication focal centers. Has an important role in maintaining genome stability. The sequence is that of 3'-5' exonuclease from Drosophila persimilis (Fruit fly).